We begin with the raw amino-acid sequence, 3477 residues long: MANRRVGRGCWEVSPTERRPPAGLRGPATEEEASSPPVLSLSHFCRSPFLCFGDVLLGDSRTVPLALDNPNEEVAEVKISHFPAADLGFSVSQRCFVLQPKDKIVISVDWTPFKEGRVREIMTFLINDVLKHQAILLGNAEKQKKKKRSLWDTIKKKKISASTSHNRRVSNIQNVNKTFSVSQKVNRVRSPLQACENLAVNEGGLPTENNSLTLEENKIPVSPISPAFNECHGATCLPLSVRRSTTYSSLHASENRELLNVDNTNVSKVSFNEKAVAETTFNSMNVSGQSGENSKLILTPNYSSTLNVTQSQINFLSPDSFVNNSHGANNELELVTCLSSDMFMTDNSKPVHLQSTTAHEIYQKILSPDSFIKDNYGLNQDLESESVNLILSPNQFLKDNMAYMCTSQQTCKVPLTNENSQVPQSPQDWSKSEVSPCIPECQGSKSPKAIFEELVEMKSDYYSFIKQNNPKFSAVQDISSHSHNKQPKRRPILSATVTKRKPTCTRENQTEINKPKAKRCLNSAVGGHEKVINNQKEKEDFHSYLPVIDPVLSKSKSYKNQIMPSSTTASVARKRKSDESMEDANVRVAVTEHTEVREIKRIHFSPSESKTSAVKKTKNVITPISKCISNREKLNLKKKTDLLIFKTPISKTNRRTKPIIAVAQSNLTFIKPLKTDIPRHPMPFAAKNMFYDERWKEKQEQGFTWWLNFILTPDDFTVKTNISEVNAATLLLGVENQHKISVPRAPTKEEMSLRAYTARCRLNRLRRAACRLFTSEKMVKAIKKLEIEIEARRLIVRKDRHLWKDVGERQKVLNWLLSYNPLWLRIGLETIYGELISLEDNSDVTGLAMFILNRLLWNPDIAAEYRHPTVPHLYRDGHEGALSKFTLKKLLLLVCFLDYAKISKLIDHDPCLFCKDAEFKASKEILLAFSRDFLSGEGDLSRHLGLLGLPVNHVQTPFDEFDFAITNLAVDLQCGVRLVRTMELLTQNWSLSKKLRIPAISRLQKMHNVDIVLQVLKSRGIELSDEHGNTILSKDIVDRHREKTLRLLWKIAFAFQVDISLNLDQLKEEIAFLKHTQSIKRTISLLSCHSDALINKKKGKRDSGSFEQYSENIKLLMDWVNAVCAFYNKKVENFTVSFSDGRVLCYLIHHYHPCYVPFDAICQRTTQTVECTQTGSVVLNSSSESDDSSLDMSLKAFDHENTSELYKELLENEKKNFHLVRSAVRDLGGIPAMINHSDMSNTIPDEKVVITYLSFLCARLLDLRKEIRAARLIQTTWRKYKLKTDLKRHQERDKAARIIQSAVINFLAKQRLRKRVNAALIIQKYWRRVLAQRKLLILKKEKLEKVQNKAASLIQGYWRRYSTRKRFLKLKYYSIILQSRIRMIIAVTSYKRYLWATVTIQRHWRAYLRRKQDQQRYEMLKSSSLIIQSMFRKWKQRKMQSQVKATVILQRAFREWHLRKRAKEENSAIVIQSWYRMHKELRKYIYIRSCVIVIQKRFRCFQAQKLYKRKKESILTIQKYYKAYLKGKIERTNYLQKRAAAIQLQAAFRRLKAHNLCRQIRAACVIQSYWRMRQDRVRFLNLKKTIIKFQAHIRKHQQLQKYKKMKKAAVIIQTHFRAYIFARKVLASYQKTRSAVIVLQSAYRGMQARKMYIHILTSVIKIQSYYRAYVSKKEFLSLKNATIKLQSIVKMKQTRKQYLHLRAAALFIQQCYRSKKIATQKREEYMQMRESCIKLQAFVRGYLVRKQMRLQRKAVISLQSYFRMRKARQYYLKMYKAIIVIQNYYHAYKAQVNQRKKFLRVKKAATCLQAAYRGYKIRQLIKQQSIAAVKIQSAFRGYNKRVKYQSVLQSIIKIQRWYRAYKTLHDTRTHFLKTKAAVVSLQSAYRGWKVRKQIRREHQAALKIQSAFRMAKAQKQFRLFKTAALVIQQNFRAWTAGRKQRMEYIELRHAVLILQSMWKGKTLRRQLQRQHKCAIIIQSYYRMHVQQKKWKIMKKAALLIQKYYKAYSIGREQHHLYLKTKAAVVTLQSAYRGMKVRKRIKDCNKAAVTIQSKYRAYKTKKKYATYRASAIIIQRWYRGIKITHRQHKEYLNLKKTAIKIQSVYRGIRVRRHIQHMHRAATYIKAMFKMHQSRISYHTMRKAAIVIQVRFRAYYQGKMQREKYLTILKAVKILQASFRGVRVRWTLRKMQIAATLIQSNYRRYKQQTYFNKLKKITKTIQQRYRAVKERNIQFQRYNKLRHSVIYIQAIFRGKKARRHLKMMHVAATLIQRRFRTLMMRRRFLSLKKTAVWIQRKYRAHLCTKHHLQFLQVQNAVIKIQSSYRRWMIRKKMREMHRAATFIQATFRMQRVHMRYQALKQASVVIQQQYQANRAAKLQRQHYLRQRHSAVILQAAFRGMKTRRHLKSMHSSATLIQSRFRSLLVRRRFISLKKATIFVQRKYRATICAKHKLHQFLQLRKAAITVQSSYRRLMVKKKLQEMQRAAVLIQATFRMHRTYVTFQTWKQASILIQQHYRTYRAAKLQKENYIRQWHSAVVIQAAYKGMKARQHLREKHKAAIIIQSTYRMHRQYCFYQKLQWATKIIQEKYRANKKKQKALQHNELKKETCVQASFQDMNMQKQIQEQHQAAIIIQKHCKAFKIRKHYLHLRATVVSIQRRYRKLTVVRTQAVICIQSYYRGFKVRRDIQNMHRAATLIQSFYRMHRAKVDYQTKKTAIVVIQNYYRLYIRVKTERKIFLAVQKSVRTIQAAFRGMKVRQKLKNISEEKMAAIVNQSALCCYRSKTQYEAVQSEGVTIQEWYKASGLACSQEAEYHSQSRAAVTIQKAFRRMVTRKVETQKCAALRIQFFLQMAVYRRRFVQQKRAAITLQHYFRTWQTRKQFLLYRKAAVVLQNHYRAFLSAKHQRQVYLQIRSSVIIIQARSKGFIQKRKFQEIKNSTIKIQAMWRRYRAKKYLCKVKAACKIQAWYRCWRAHKEYLAILKAVKIIQGGFYTKLERTWFLNVRASAIIIQRKWRAILSAKIAHEHFLMIKRHRAACLIQAHYRGYKERQVFLRQKSAALIIQKYIRAREAGKRERIKYIEFKKSTVILQALVRGWLVRKRILEQRTKIRLLHFTAAAYYHLNALRIQRAYKLYLAVKNANKQVNSVICIQRWFRARLQQKKFIQKYYSIEKIEHEGQECLSQRNRAASVIQKAVRHFVLRKKQEKFTSGIIKIQALWRGYSWRKKNDCTKIKAIRLSLQVVNREIREENKLYKRTALALHYLLTYKHLSAILEALKHLEVVTRLSPLCCENMAQSGAISKIFVLIRSCNRSVPCMEVIRYAVQVLLNVSKYEKTTSAVYDVENCVDTLLELLQIYREKPGNKVADKGGSIFTKTCCLLAILLKTTNRASDVRSRSKVVDRIYSLYKLTAHKHKMNTERILHKQKKNSSISIPFIPETPVRTRIVSRLKPDWVLRRDNMEEITNPLQAIQMVMDTLGIPY.

The segment at 1-34 is disordered; it reads MANRRVGRGCWEVSPTERRPPAGLRGPATEEEAS. Phosphoserine occurs at positions 283, 367, 392, and 425. The span at 417-433 shows a compositional bias: polar residues; it reads NENSQVPQSPQDWSKSE. Disordered stretches follow at residues 417–436 and 563–583; these read NENS…EVSP and MPSS…SMED. Ser605 is modified (phosphoserine). Residues 920–1056 form the Calponin-homology (CH) 1 domain; that stretch reads KASKEILLAF…LLWKIAFAFQ (137 aa). The stretch at 1057–1076 forms a coiled coil; sequence VDISLNLDQLKEEIAFLKHT. The residue at position 1103 (Ser1103) is a Phosphoserine. A Calponin-homology (CH) 2 domain is found at 1110-1261; sequence SENIKLLMDW…YLSFLCARLL (152 aa). 39 consecutive IQ domains span residues 1347 to 1378, 1393 to 1422, 1582 to 1613, 1605 to 1634, 1632 to 1661, 1655 to 1684, 1728 to 1757, 1751 to 1782, 1801 to 1830, 1824 to 1853, 1874 to 1903, 1897 to 1928, 1947 to 1978, 1970 to 2001, 2020 to 2049, 2043 to 2074, 2093 to 2124, 2116 to 2147, 2239 to 2270, 2262 to 2293, 2311 to 2342, 2334 to 2365, 2384 to 2415, 2407 to 2438, 2457 to 2488, 2480 to 2511, 2530 to 2561, 2624 to 2653, 2665 to 2696, 2688 to 2719, 2738 to 2767, 2814 to 2845, 2859 to 2890, 2909 to 2938, 2932 to 2963, 2954 to 2985, 3029 to 3060, 3079 to 3110, and 3204 to 3235; these read QNKA…IILQ, YLWA…MLKS, LKKT…VIIQ, MKKA…KTRS, TRSA…SVIK, ILTS…ATIK, MRES…AVIS, QRKA…IVIQ, VKKA…AAVK, QSIA…SIIK, TKAA…AALK, EHQA…LVIQ, LRHA…IIIQ, QHKC…LLIQ, TKAA…AAVT, CNKA…IIIQ, LKKT…TYIK, MHRA…IVIQ, LRHS…TLIQ, MHVA…VWIQ, VQNA…TFIQ, MHRA…VVIQ, QRHS…TLIQ, MHSS…IFVQ, LRKA…VLIQ, MQRA…ILIQ, QWHS…IIIQ, QHQA…TVVS, RTQA…TLIQ, VQKS…EKMA, QSRA…RIQF, QKRA…VVLQ, IRSS…STIK, IKNS…KIQA, KVKA…KIIQ, RHRA…LIIQ, FKKS…RLLH, and FTSG…IRLS.

The protein localises to the cytoplasm. The protein resides in the cytoskeleton. Its subcellular location is the spindle. It localises to the nucleus. Probable role in mitotic spindle regulation and coordination of mitotic processes. May have a preferential role in regulating neurogenesis. This chain is Abnormal spindle-like microcephaly-associated protein homolog (ASPM), found in Colobus guereza (Mantled guereza).